The sequence spans 1517 residues: DNA-directed RNA polymerase subunit beta' (1517 aa).

4 residues coordinate Zn(2+): Cys71, Cys73, Cys86, and Cys89. Positions 482, 484, and 486 each coordinate Mg(2+). The Zn(2+) site is built by Cys812, Cys886, Cys893, and Cys896.

Belongs to the RNA polymerase beta' chain family. The RNAP catalytic core consists of 2 alpha, 1 beta, 1 beta' and 1 omega subunit. When a sigma factor is associated with the core the holoenzyme is formed, which can initiate transcription. It depends on Mg(2+) as a cofactor. Zn(2+) is required as a cofactor.

The enzyme catalyses RNA(n) + a ribonucleoside 5'-triphosphate = RNA(n+1) + diphosphate. Its function is as follows. DNA-dependent RNA polymerase catalyzes the transcription of DNA into RNA using the four ribonucleoside triphosphates as substrates. This Campylobacter jejuni subsp. jejuni serotype O:23/36 (strain 81-176) protein is DNA-directed RNA polymerase subunit beta'.